The primary structure comprises 412 residues: Argininosuccinate synthase (412 aa).

An ATP-binding site is contributed by 10 to 18; it reads AYSGGLDTS. Residue Y89 coordinates L-citrulline. G119 serves as a coordination point for ATP. The L-aspartate site is built by T121, N125, and D126. Residue N125 coordinates L-citrulline. R129, S177, E261, and Y273 together coordinate L-citrulline.

Belongs to the argininosuccinate synthase family. Type 1 subfamily. As to quaternary structure, homotetramer.

Its subcellular location is the cytoplasm. It carries out the reaction L-citrulline + L-aspartate + ATP = 2-(N(omega)-L-arginino)succinate + AMP + diphosphate + H(+). It participates in amino-acid biosynthesis; L-arginine biosynthesis; L-arginine from L-ornithine and carbamoyl phosphate: step 2/3. In Bifidobacterium longum (strain DJO10A), this protein is Argininosuccinate synthase.